We begin with the raw amino-acid sequence, 258 residues long: Imidazole glycerol phosphate synthase subunit HisF (258 aa).

Residues D11 and D130 contribute to the active site.

The protein belongs to the HisA/HisF family. Heterodimer of HisH and HisF.

The protein localises to the cytoplasm. The enzyme catalyses 5-[(5-phospho-1-deoxy-D-ribulos-1-ylimino)methylamino]-1-(5-phospho-beta-D-ribosyl)imidazole-4-carboxamide + L-glutamine = D-erythro-1-(imidazol-4-yl)glycerol 3-phosphate + 5-amino-1-(5-phospho-beta-D-ribosyl)imidazole-4-carboxamide + L-glutamate + H(+). Its pathway is amino-acid biosynthesis; L-histidine biosynthesis; L-histidine from 5-phospho-alpha-D-ribose 1-diphosphate: step 5/9. Functionally, IGPS catalyzes the conversion of PRFAR and glutamine to IGP, AICAR and glutamate. The HisF subunit catalyzes the cyclization activity that produces IGP and AICAR from PRFAR using the ammonia provided by the HisH subunit. This Shigella dysenteriae serotype 1 (strain Sd197) protein is Imidazole glycerol phosphate synthase subunit HisF.